The following is a 305-amino-acid chain: Thyroxine 5-deiodinase (305 aa).

At M1–T43 the chain is on the cytoplasmic side. The chain crosses the membrane as a helical; Signal-anchor for type II membrane protein span at residues A44 to L63. Over D64–V305 the chain is Extracellular. Residues G79 to D98 are disordered. Positions E82 to P96 are enriched in acidic residues. The active site involves U171. Residue U171 is a non-standard amino acid, selenocysteine.

The protein belongs to the iodothyronine deiodinase family. As to quaternary structure, monomer. Homodimer. May undergo minor heretodimerization with DIO1 and DIO2. Expressed in brain only.

It is found in the cell membrane. The protein resides in the endosome membrane. It carries out the reaction 3,3',5'-triiodo-L-thyronine + iodide + A + H(+) = L-thyroxine + AH2. It catalyses the reaction 3,3'-diiodo-L-thyronine + iodide + A + H(+) = 3,3',5-triiodo-L-thyronine + AH2. The catalysed reaction is 3-iodo-L-thyronine + iodide + A + H(+) = 3,5-diiodo-L-thyronine + AH2. The enzyme catalyses L-thyronine + iodide + A + H(+) = 3-iodo-L-thyronine + AH2. It carries out the reaction 3',5'-diiodo-L-thyronine + iodide + A + H(+) = 3,3',5'-triiodo-L-thyronine + AH2. It catalyses the reaction 3'-iodo-L-thyronine + iodide + A + H(+) = 3,3'-diiodo-L-thyronine + AH2. The catalysed reaction is 3,3',5'-triiodothyronamine + iodide + A + H(+) = 3,3',5,5'-tetraiodothyronamine + AH2. The enzyme catalyses 3',5'-diiodothyronamine + iodide + A + H(+) = 3,3',5'-triiodothyronamine + AH2. It carries out the reaction 3,3'-diiodothyronamine + iodide + A + H(+) = 3,3',5-triiodothyronamine + AH2. It catalyses the reaction 3-iodothyronamine + iodide + A + H(+) = 3,5-diiodothyronamine + AH2. The catalysed reaction is 3'-iodothyronamine + iodide + A + H(+) = 3,3'-diiodothyronamine + AH2. The enzyme catalyses thyronamine + iodide + A + H(+) = 3-iodothyronamine + AH2. Plays a crucial role in the metabolism of thyroid hormones (TH) and has specific roles in TH activation and inactivation by deiodination, particularly in different tissues. Catalyzes the deiodination of L-thyroxine (T4) to 3,3',5'-triiodothyronine (rT3), 3,5-diiodothyronine (3,5-T2) to 3-monoiodothyronine (3-T1), rT3 to 3',5'-diiodothyronine (3',5'-T2) and 3,3'-diiodothyronine (3,3'-T2) to 3'-monoiodothyronine (3'-T1) via inner-ring deiodination (IRD). Catalyzes the deiodination of 3,5,3'-triiodothyronine (T3) to 3,3'-diiodothyronine (3,3'-T2) via IRD. Catalyzes the deiodination of 3-T1 to L-thyronine (T0) via outer-ring deiodination (ORD). Catalyzes the tyrosyl ring deiodinations of 3,3',5,5'-tetraiodothyronamine, 3,3',5'-triiodothyronamine, 3,5,3'-triiodothyronamine, 3,5-diiodothyronamine, 3,3'-diiodothyronamine and 3-iodothyronamine. In Sus scrofa (Pig), this protein is Thyroxine 5-deiodinase (DIO3).